A 268-amino-acid chain; its full sequence is Ubiquinone biosynthesis protein COQ4 homolog 1, mitochondrial (268 aa).

Residues 1–10 (MFLRRVHPVR) show a composition bias toward basic residues. Residues 1-18 (MFLRRVHPVRLGHASQRS) constitute a mitochondrion transit peptide. The tract at residues 1–44 (MFLRRVHPVRLGHASQRSLTTTKSRNESTTTTVEAPQAAPSPPP) is disordered. Residues 20-38 (TTTKSRNESTTTTVEAPQA) show a composition bias toward low complexity. Zn(2+) is bound by residues His-177, Asp-178, His-181, and Glu-193.

This sequence belongs to the COQ4 family. In terms of assembly, component of a multi-subunit COQ enzyme complex. The cofactor is Zn(2+).

Its subcellular location is the mitochondrion inner membrane. It catalyses the reaction a 4-hydroxy-3-methoxy-5-(all-trans-polyprenyl)benzoate + H(+) = a 2-methoxy-6-(all-trans-polyprenyl)phenol + CO2. It participates in cofactor biosynthesis; ubiquinone biosynthesis. Functionally, lyase that catalyzes the C1-decarboxylation of 4-hydroxy-3-methoxy-5-(all-trans-polyprenyl)benzoic acid into 2-methoxy-6-(all-trans-polyprenyl)phenol during ubiquinone biosynthesis. This Culex quinquefasciatus (Southern house mosquito) protein is Ubiquinone biosynthesis protein COQ4 homolog 1, mitochondrial.